The following is a 229-amino-acid chain: Triosephosphate isomerase (229 aa).

16 to 18 contacts substrate; the sequence is NFK. His-100 acts as the Electrophile in catalysis. The Proton acceptor role is filled by Glu-148. Substrate is bound by residues Ile-153, Gly-188, and 209 to 210; that span reads AS.

The protein belongs to the triosephosphate isomerase family. In terms of assembly, homotetramer; dimer of dimers.

Its subcellular location is the cytoplasm. The enzyme catalyses D-glyceraldehyde 3-phosphate = dihydroxyacetone phosphate. Its pathway is carbohydrate biosynthesis; gluconeogenesis. It functions in the pathway carbohydrate degradation; glycolysis; D-glyceraldehyde 3-phosphate from glycerone phosphate: step 1/1. In terms of biological role, involved in the gluconeogenesis. Catalyzes stereospecifically the conversion of dihydroxyacetone phosphate (DHAP) to D-glyceraldehyde-3-phosphate (G3P). The polypeptide is Triosephosphate isomerase (Methanothermobacter thermautotrophicus (strain ATCC 29096 / DSM 1053 / JCM 10044 / NBRC 100330 / Delta H) (Methanobacterium thermoautotrophicum)).